A 204-amino-acid polypeptide reads, in one-letter code: Glycerol-3-phosphate acyltransferase (204 aa).

The next 5 helical transmembrane spans lie at 6–26 (YIIIAVVAYLLGNISTSYIVA), 80–100 (LVGIDTLLAGYLAVICVVAGH), 122–142 (LAVNPVITLMCLAVFILVVAI), 144–164 (KYVSLGSVVGIGCSPIFMIMV), and 168–188 (AGLIVALFLTASVIYNHRANI).

The protein belongs to the PlsY family. Probably interacts with PlsX.

The protein resides in the cell membrane. It catalyses the reaction an acyl phosphate + sn-glycerol 3-phosphate = a 1-acyl-sn-glycero-3-phosphate + phosphate. The protein operates within lipid metabolism; phospholipid metabolism. Functionally, catalyzes the transfer of an acyl group from acyl-phosphate (acyl-PO(4)) to glycerol-3-phosphate (G3P) to form lysophosphatidic acid (LPA). This enzyme utilizes acyl-phosphate as fatty acyl donor, but not acyl-CoA or acyl-ACP. This Clostridioides difficile (strain 630) (Peptoclostridium difficile) protein is Glycerol-3-phosphate acyltransferase.